Here is a 192-residue protein sequence, read N- to C-terminus: ADP-ribosylation factor-like protein 4C (192 aa).

Residue G2 is the site of N-myristoyl glycine attachment. GTP is bound by residues 20–27 (GLDSAGKT), 68–72 (DVGGQ), and 127–130 (NKQD).

This sequence belongs to the small GTPase superfamily. Arf family. As to quaternary structure, interacts with CYTH2. Interacts with alpha tubulin; interaction is independent on the ARL4C GTP or GDP binding status. In terms of tissue distribution, expressed in several tumor cell lines (at protein level). Expressed in lung, brain, leukocytes and placenta.

It is found in the cell projection. The protein localises to the filopodium. The protein resides in the cell membrane. Its subcellular location is the cytoplasm. In terms of biological role, small GTP-binding protein which cycles between an inactive GDP-bound and an active GTP-bound form, and the rate of cycling is regulated by guanine nucleotide exchange factors (GEF) and GTPase-activating proteins (GAP). GTP-binding protein that does not act as an allosteric activator of the cholera toxin catalytic subunit. May be involved in transport between a perinuclear compartment and the plasma membrane, apparently linked to the ABCA1-mediated cholesterol secretion pathway. Recruits CYTH1, CYTH2, CYTH3 and CYTH4 to the plasma membrane in the GDP-bound form. Regulates the microtubule-dependent intracellular vesicular transport from early endosome to recycling endosome process. The protein is ADP-ribosylation factor-like protein 4C (ARL4C) of Homo sapiens (Human).